The sequence spans 314 residues: Methionyl-tRNA formyltransferase (314 aa).

110 to 113 contributes to the (6S)-5,6,7,8-tetrahydrofolate binding site; that stretch reads SLLP.

The protein belongs to the Fmt family.

The catalysed reaction is L-methionyl-tRNA(fMet) + (6R)-10-formyltetrahydrofolate = N-formyl-L-methionyl-tRNA(fMet) + (6S)-5,6,7,8-tetrahydrofolate + H(+). Attaches a formyl group to the free amino group of methionyl-tRNA(fMet). The formyl group appears to play a dual role in the initiator identity of N-formylmethionyl-tRNA by promoting its recognition by IF2 and preventing the misappropriation of this tRNA by the elongation apparatus. This chain is Methionyl-tRNA formyltransferase, found in Lactobacillus gasseri (strain ATCC 33323 / DSM 20243 / BCRC 14619 / CIP 102991 / JCM 1131 / KCTC 3163 / NCIMB 11718 / NCTC 13722 / AM63).